Consider the following 457-residue polypeptide: UDP-N-acetylmuramoylalanine--D-glutamate ligase (457 aa).

126-132 contributes to the ATP binding site; sequence GTAGKGS.

This sequence belongs to the MurCDEF family.

Its subcellular location is the cytoplasm. The enzyme catalyses UDP-N-acetyl-alpha-D-muramoyl-L-alanine + D-glutamate + ATP = UDP-N-acetyl-alpha-D-muramoyl-L-alanyl-D-glutamate + ADP + phosphate + H(+). It functions in the pathway cell wall biogenesis; peptidoglycan biosynthesis. Its function is as follows. Cell wall formation. Catalyzes the addition of glutamate to the nucleotide precursor UDP-N-acetylmuramoyl-L-alanine (UMA). This is UDP-N-acetylmuramoylalanine--D-glutamate ligase from Deinococcus radiodurans (strain ATCC 13939 / DSM 20539 / JCM 16871 / CCUG 27074 / LMG 4051 / NBRC 15346 / NCIMB 9279 / VKM B-1422 / R1).